Reading from the N-terminus, the 208-residue chain is Small ribosomal subunit protein uS2 (208 aa).

Residues 189-208 are disordered; that stretch reads KPDQDLPVPPEEFETKLVQS.

The protein belongs to the universal ribosomal protein uS2 family.

The protein is Small ribosomal subunit protein uS2 (rps2) of Pyrobaculum aerophilum (strain ATCC 51768 / DSM 7523 / JCM 9630 / CIP 104966 / NBRC 100827 / IM2).